A 298-amino-acid chain; its full sequence is Oxygen-dependent coproporphyrinogen-III oxidase (298 aa).

Serine 92 contributes to the substrate binding site. Residues histidine 96 and histidine 106 each contribute to the a divalent metal cation site. Histidine 106 acts as the Proton donor in catalysis. 108–110 (NVR) contributes to the substrate binding site. Residues histidine 145 and histidine 175 each coordinate a divalent metal cation. Residues 239–274 (YVEFNLVYDRGTLFGLQSGGRSESILMSLPPRVRWE) form an important for dimerization region. 257–259 (GGR) contributes to the substrate binding site.

It belongs to the aerobic coproporphyrinogen-III oxidase family. In terms of assembly, homodimer. A divalent metal cation is required as a cofactor.

The protein localises to the cytoplasm. The enzyme catalyses coproporphyrinogen III + O2 + 2 H(+) = protoporphyrinogen IX + 2 CO2 + 2 H2O. The protein operates within porphyrin-containing compound metabolism; protoporphyrin-IX biosynthesis; protoporphyrinogen-IX from coproporphyrinogen-III (O2 route): step 1/1. Functionally, involved in the heme biosynthesis. Catalyzes the aerobic oxidative decarboxylation of propionate groups of rings A and B of coproporphyrinogen-III to yield the vinyl groups in protoporphyrinogen-IX. The chain is Oxygen-dependent coproporphyrinogen-III oxidase from Stenotrophomonas maltophilia (strain K279a).